The primary structure comprises 136 residues: ATP synthase epsilon chain (136 aa).

The interval 95 to 115 is disordered; the sequence is DFSEAQSRLEEANKGSDRREQ. Residues 101-115 are compositionally biased toward basic and acidic residues; that stretch reads SRLEEANKGSDRREQ.

This sequence belongs to the ATPase epsilon chain family. F-type ATPases have 2 components, CF(1) - the catalytic core - and CF(0) - the membrane proton channel. CF(1) has five subunits: alpha(3), beta(3), gamma(1), delta(1), epsilon(1). CF(0) has three main subunits: a, b and c.

It is found in the cellular thylakoid membrane. Produces ATP from ADP in the presence of a proton gradient across the membrane. This Rippkaea orientalis (strain PCC 8801 / RF-1) (Cyanothece sp. (strain PCC 8801)) protein is ATP synthase epsilon chain.